We begin with the raw amino-acid sequence, 188 residues long: Putative CC-type chemokine FPV060 (188 aa).

Belongs to the intercrine beta (chemokine CC) family. Highly divergent.

The sequence is that of Putative CC-type chemokine FPV060 from Fowlpox virus (strain NVSL) (FPV).